A 392-amino-acid polypeptide reads, in one-letter code: Galactose-1-phosphate uridylyltransferase (392 aa).

Zn(2+)-binding residues include cysteine 52 and cysteine 55. Residues alanine 61 and 77–78 (ND) contribute to the UDP-alpha-D-glucose site. Residue histidine 126 participates in Zn(2+) binding. A UDP-alpha-D-glucose-binding site is contributed by asparagine 194. Histidine 205 provides a ligand contact to Zn(2+). Histidine 207 functions as the Tele-UMP-histidine intermediate in the catalytic mechanism. Residue glutamine 209 coordinates UDP-alpha-D-glucose. Fe cation contacts are provided by glutamate 223, histidine 323, histidine 340, and histidine 342. Residues 355-358 (KFLV) and 360-361 (YE) each bind UDP-alpha-D-glucose.

Belongs to the galactose-1-phosphate uridylyltransferase type 1 family. In terms of assembly, homodimer. Requires Zn(2+) as cofactor.

It catalyses the reaction alpha-D-galactose 1-phosphate + UDP-alpha-D-glucose = alpha-D-glucose 1-phosphate + UDP-alpha-D-galactose. The protein operates within carbohydrate metabolism; galactose metabolism. In Neurospora crassa (strain ATCC 24698 / 74-OR23-1A / CBS 708.71 / DSM 1257 / FGSC 987), this protein is Galactose-1-phosphate uridylyltransferase (gal-7).